Reading from the N-terminus, the 334-residue chain is B1 bradykinin receptor (334 aa).

The disordered stretch occupies residues 1–21 (MASQASLKLQPSNQSQQAPPN). Over 1–41 (MASQASLKLQPSNQSQQAPPNITSCEGAPEAWDLLCRVLPG) the chain is Extracellular. The span at 10 to 21 (QPSNQSQQAPPN) shows a compositional bias: low complexity. N-linked (GlcNAc...) asparagine glycosylation is found at Asn13 and Asn21. The chain crosses the membrane as a helical span at residues 42–62 (FVITVCFFGLLGNLLVLSFFL). Residues 63–80 (LPWRRWWQQRRQRLTIAE) are Cytoplasmic-facing. The helical transmembrane segment at 81-101 (IYLANLAASDLVFVLGLPFWA) threads the bilayer. The Extracellular segment spans residues 102–118 (ENVGNRFNWPFGSDLCR). Cys117 and Cys196 are oxidised to a cystine. Residues 119 to 139 (VVSGVIKANLFISIFLVVAIS) form a helical membrane-spanning segment. At 140–161 (QDRYRLLVYPMTSWGNRRRRQA) the chain is on the cytoplasmic side. Residues 162–182 (QVTCLLIWVAGGLLSTPTFLL) form a helical membrane-spanning segment. At 183–214 (RSVKVVPDLNISACILLFPHEAWHFVRMVELN) the chain is on the extracellular side. Residue Asn192 is glycosylated (N-linked (GlcNAc...) asparagine). The chain crosses the membrane as a helical span at residues 215-235 (VLGFLLPLAAILYFNFHILAS). At 236–258 (LRGQKEASRTRCGGPKDSKTMGL) the chain is on the cytoplasmic side. The chain crosses the membrane as a helical span at residues 259 to 279 (ILTLVASFLVCWAPYHFFAFL). The Extracellular segment spans residues 280–302 (DFLVQVRVIQDCFWKELTDLGLQ). The chain crosses the membrane as a helical span at residues 303–323 (LANFFAFVNSCLNPLIYVFAG). At 324–334 (RLFKTRVLGTL) the chain is on the cytoplasmic side.

This sequence belongs to the G-protein coupled receptor 1 family. Bradykinin receptor subfamily. BDKRB1 sub-subfamily. As to expression, expressed in heart, liver and lung.

Its subcellular location is the cell membrane. Functionally, this is a receptor for bradykinin. Could be a factor in chronic pain and inflammation. The chain is B1 bradykinin receptor (Bdkrb1) from Mus musculus (Mouse).